Consider the following 569-residue polypeptide: BICD family-like cargo adapter 1 (569 aa).

Residues 1 to 36 (MSASCLDLISAPPQPDSDRMDRALNPGRQNSPDTAG) are disordered. Residues 97-101 (AAKLG) carry the CC1 box motif. Residues 102–283 (KALLERNQDL…TLELEKHCHH (182 aa)) adopt a coiled-coil conformation. The tract at residues 385–405 (ALSTDSSMDESSETLSAKDVP) is disordered. The stretch at 458 to 520 (NEQLQSAIRD…LEAWQDDMHR (63 aa)) forms a coiled coil. The disordered stretch occupies residues 533–554 (EWKDPPFSFSRRGAAASRPTQR).

Belongs to the BICDR family. As to quaternary structure, part of a tripartite complex with dynein and dynactin, acts an adapter linking the dynein motor complex and dynactin. In terms of tissue distribution, highly expressed in developing neural tissues and developing eye.

The protein localises to the cytoplasm. It localises to the cytoskeleton. It is found in the microtubule organizing center. Its subcellular location is the centrosome. Its function is as follows. Acts as an adapter protein linking the dynein motor complex to various cargos and converts dynein from a non-processive to a highly processive motor in the presence of dynactin. Facilitates the interaction between dynein and dynactin and activates dynein processivity (the ability to move along a microtubule for a long distance without falling off the track). Predominantly recruits 2 dyneins, which increases both the force and speed of the microtubule motor. Component of secretory vesicle machinery in developing neurons that acts as a regulator of neurite outgrowth. Regulates the secretory vesicle transport by controlling the accumulation of Rab6-containing secretory vesicles in the pericentrosomal region restricting anterograde secretory transport during the early phase of neuronal differentiation, thereby inhibiting neuritogenesis. This chain is BICD family-like cargo adapter 1 (bicdl1), found in Danio rerio (Zebrafish).